The following is a 315-amino-acid chain: Glutamyl-Q tRNA(Asp) synthetase (315 aa).

Residues 12–16 and E48 contribute to the L-glutamate site; that span reads RFAPS. The 'HIGH' region signature appears at 15–25; that stretch reads PSPSGPLHFGS. Residues C104, C106, Y124, and C128 each coordinate Zn(2+). L-glutamate is bound by residues Y181 and R199. The 'KMSKS' region signature appears at 237–241; sequence KLSKQ. ATP is bound at residue K240.

Belongs to the class-I aminoacyl-tRNA synthetase family. GluQ subfamily. The cofactor is Zn(2+).

In terms of biological role, catalyzes the tRNA-independent activation of glutamate in presence of ATP and the subsequent transfer of glutamate onto a tRNA(Asp). Glutamate is transferred on the 2-amino-5-(4,5-dihydroxy-2-cyclopenten-1-yl) moiety of the queuosine in the wobble position of the QUC anticodon. The polypeptide is Glutamyl-Q tRNA(Asp) synthetase (Aromatoleum aromaticum (strain DSM 19018 / LMG 30748 / EbN1) (Azoarcus sp. (strain EbN1))).